Here is a 949-residue protein sequence, read N- to C-terminus: Translation initiation factor IF-2 (949 aa).

Disordered regions lie at residues 54–183, 217–288, and 305–357; these read FLKP…EAAP, LPAA…EVAL, and EVVA…EMQA. 2 stretches are compositionally biased toward basic and acidic residues: residues 67–92 and 101–164; these read DQEK…ERHI and IEAK…EEAA. Composition is skewed to low complexity over residues 165-183 and 217-228; these read RAAA…EAAP and LPAAAPAAPSAP. Basic and acidic residues-rich tracts occupy residues 235 to 288 and 330 to 339; these read PVEE…EVAL and KYQDNEDRLQ. The 175-residue stretch at 445–619 folds into the tr-type G domain; the sequence is TRPPVITVMG…EMLNLQSNPT (175 aa). Residues 454 to 461 form a G1 region; it reads GHVDHGKT. 454–461 is a binding site for GTP; that stretch reads GHVDHGKT. Residues 479-483 form a G2 region; sequence GITQH. Residues 501-504 are G3; the sequence is DTPG. Residues 501 to 505 and 555 to 558 contribute to the GTP site; these read DTPGH and NKID. The segment at 555-558 is G4; sequence NKID. Residues 591-593 form a G5 region; the sequence is SAK.

The protein belongs to the TRAFAC class translation factor GTPase superfamily. Classic translation factor GTPase family. IF-2 subfamily.

The protein localises to the cytoplasm. In terms of biological role, one of the essential components for the initiation of protein synthesis. Protects formylmethionyl-tRNA from spontaneous hydrolysis and promotes its binding to the 30S ribosomal subunits. Also involved in the hydrolysis of GTP during the formation of the 70S ribosomal complex. The polypeptide is Translation initiation factor IF-2 (Magnetococcus marinus (strain ATCC BAA-1437 / JCM 17883 / MC-1)).